The sequence spans 483 residues: Cobyric acid synthase (483 aa).

Residues 251–438 form the GATase cobBQ-type domain; the sequence is ALIVAVPMLP…LHGVFSADRF (188 aa). C333 serves as the catalytic Nucleophile. H430 is a catalytic residue.

The protein belongs to the CobB/CobQ family. CobQ subfamily.

The protein operates within cofactor biosynthesis; adenosylcobalamin biosynthesis. Functionally, catalyzes amidations at positions B, D, E, and G on adenosylcobyrinic A,C-diamide. NH(2) groups are provided by glutamine, and one molecule of ATP is hydrogenolyzed for each amidation. The chain is Cobyric acid synthase from Brucella suis (strain ATCC 23445 / NCTC 10510).